Consider the following 386-residue polypeptide: O-phospho-L-seryl-tRNA:Cys-tRNA synthase (386 aa).

Residues 89 to 90, N196, and 219 to 221 contribute to the pyridoxal 5'-phosphate site; these read AR and SGH. An N6-(pyridoxal phosphate)lysine modification is found at K222.

This sequence belongs to the SepCysS family. Homodimer. Interacts with SepRS. Requires pyridoxal 5'-phosphate as cofactor.

The enzyme catalyses O-phospho-L-seryl-tRNA(Cys) + hydrogen sulfide + H(+) = L-cysteinyl-tRNA(Cys) + phosphate. Its function is as follows. Converts O-phospho-L-seryl-tRNA(Cys) (Sep-tRNA(Cys)) to L-cysteinyl-tRNA(Cys) (Cys-tRNA(Cys)). This Methanosarcina mazei (strain ATCC BAA-159 / DSM 3647 / Goe1 / Go1 / JCM 11833 / OCM 88) (Methanosarcina frisia) protein is O-phospho-L-seryl-tRNA:Cys-tRNA synthase.